A 198-amino-acid polypeptide reads, in one-letter code: Pyridoxal 5'-phosphate synthase subunit PdxT (198 aa).

50–52 contributes to the L-glutamine binding site; that stretch reads GES. Catalysis depends on cysteine 82, which acts as the Nucleophile. L-glutamine-binding positions include arginine 111 and 140 to 141; that span reads IR. Active-site charge relay system residues include histidine 177 and glutamate 179.

It belongs to the glutaminase PdxT/SNO family. As to quaternary structure, in the presence of PdxS, forms a dodecamer of heterodimers. Only shows activity in the heterodimer.

It catalyses the reaction aldehydo-D-ribose 5-phosphate + D-glyceraldehyde 3-phosphate + L-glutamine = pyridoxal 5'-phosphate + L-glutamate + phosphate + 3 H2O + H(+). It carries out the reaction L-glutamine + H2O = L-glutamate + NH4(+). It participates in cofactor biosynthesis; pyridoxal 5'-phosphate biosynthesis. Its function is as follows. Catalyzes the hydrolysis of glutamine to glutamate and ammonia as part of the biosynthesis of pyridoxal 5'-phosphate. The resulting ammonia molecule is channeled to the active site of PdxS. This Leifsonia xyli subsp. xyli (strain CTCB07) protein is Pyridoxal 5'-phosphate synthase subunit PdxT.